We begin with the raw amino-acid sequence, 535 residues long: CTP synthase (535 aa).

The segment at 1 to 268 is amidoligase domain; that stretch reads MPNKYIVVTG…VSKILSRLKL (268 aa). Ser-14 contacts CTP. Ser-14 provides a ligand contact to UTP. Residue 15–20 participates in ATP binding; sequence SVGKGT. Tyr-55 is an L-glutamine binding site. An ATP-binding site is contributed by Asp-72. Mg(2+) is bound by residues Asp-72 and Glu-142. CTP contacts are provided by residues 149–151, 189–194, and Lys-225; these read DIE and KTKPLQ. Residues 189-194 and Lys-225 each bind UTP; that span reads KTKPLQ. Val-243 is a binding site for ATP. The 234-residue stretch at 302 to 535 folds into the Glutamine amidotransferase type-1 domain; sequence YTKLKDSYIS…LGFIRAVASL (234 aa). An L-glutamine-binding site is contributed by Gly-359. Catalysis depends on Cys-386, which acts as the Nucleophile; for glutamine hydrolysis. Residues 387-390, Glu-410, and Arg-467 each bind L-glutamine; that span reads FGFQ. Active-site residues include His-511 and Glu-513.

The protein belongs to the CTP synthase family. In terms of assembly, homotetramer in the presence of ATP and UTP. The enzyme dissociates into homodimers in the absence of substrate nucleotides.

The enzyme catalyses UTP + L-glutamine + ATP + H2O = CTP + L-glutamate + ADP + phosphate + 2 H(+). The catalysed reaction is L-glutamine + H2O = L-glutamate + NH4(+). It carries out the reaction UTP + NH4(+) + ATP = CTP + ADP + phosphate + 2 H(+). Its pathway is pyrimidine metabolism; CTP biosynthesis via de novo pathway; CTP from UDP: step 2/2. With respect to regulation, allosterically activated by GTP, when glutamine is the substrate; GTP has no effect on the reaction when ammonia is the substrate. The allosteric effector GTP functions by stabilizing the protein conformation that binds the tetrahedral intermediate(s) formed during glutamine hydrolysis. Inhibited by the product CTP, via allosteric rather than competitive inhibition. Functionally, catalyzes the ATP-dependent amination of UTP to CTP with either L-glutamine or ammonia as the source of nitrogen. Regulates intracellular CTP levels through interactions with the four ribonucleotide triphosphates. This is CTP synthase from Saccharolobus solfataricus (strain ATCC 35092 / DSM 1617 / JCM 11322 / P2) (Sulfolobus solfataricus).